The primary structure comprises 484 residues: Probable peptide/nitrate transporter At3g43790 (484 aa).

12 helical membrane passes run 39-59 (FIWL…PYIY), 76-96 (FYAG…SIFW), 107-127 (PIIL…GLST), 129-149 (FWLA…LGVI), 168-188 (VVST…GYLA), 210-230 (FLPS…CWWL), 278-298 (MAII…NEIF), 318-338 (VGEV…LVYP), 355-375 (VLLI…GVTL), 381-401 (CASI…FIML), 416-436 (ISMT…GVLF), and 460-480 (VFLV…IPYI).

Belongs to the major facilitator superfamily.

It is found in the membrane. This chain is Probable peptide/nitrate transporter At3g43790 (ZIFL2), found in Arabidopsis thaliana (Mouse-ear cress).